Reading from the N-terminus, the 372-residue chain is MVECSGTQLWASGRPFIIHGFNTYWLMSFAADQATRPRVTAAIAEAAEAGLNVCRTWAFSDGGYRALQTVPFHYDEDVFQALDFVVSEAKRHNMRLILSLCNNWEDYGGKAQYVRWGKEAGLDLTSEDDFFSDPTIKSYYKAFVEAVVTRINTVTNETYKDDPTILAWELINEPRCPSDPSGDTLQAWIEEMASYVKSIDPVHLLEIGIEGFYGLSTPELLPVNPDEYSGHAGTDFIRNHQAPGIDLASIHVYSDTWLPHSIKENHLQFVDKWMQQHIHDAANLLGMPIVVGEFGVSVKDGKFGNEFREDFMKTVYRIFLSSWKEGVIGGGCLLWQLFPEGAEHMDDGYAVIFAKSPSTLSLLANHLRCLEC.

Positions 57 and 172 each coordinate substrate. Glu173 serves as the catalytic Proton donor. Tyr253 is a substrate binding site. Glu293 serves as the catalytic Nucleophile. Trp335 is a substrate binding site.

This sequence belongs to the glycosyl hydrolase 5 (cellulase A) family. In terms of tissue distribution, expressed in stems and leaves and seeds.

The catalysed reaction is Random hydrolysis of (1-&gt;4)-beta-D-mannosidic linkages in mannans, galactomannans and glucomannans.. The protein is Mannan endo-1,4-beta-mannosidase 8 (MAN8) of Oryza sativa subsp. japonica (Rice).